The following is a 1465-amino-acid chain: MSESLAETAAAAENEEQADDSMEKLVFDEEDEQMVSGEDLLGGKSLIMSDDSEAEDGSQEKPLSPKDRRRRMMDSDQEEDAMDQGNGDSIKNSEDVEEEMVSRPKKKVSAIIDSDNDDEQQAEKKTQKEEGKQPVKSKKKRSQVNQEDQEKPVKSNKTKKAVKNKTQANKAEDDQDNPSKEDKPKKVVKNKKQTNKDGKPQTNEEYDHHQQHEKPAKTQKSKKLAKKQKQQEDDKEDNGTEQEKKKPSPKSKAKKSDKSKIDSLMDNEEDAGEDLKMYQEDQEPQKQKTKKSAKKTNKDSKEESGEDQEHQEQKKPLKKIKLDNIDTKEDKEQIVKPKKMAKKNKQKVLSDDESEENQNEKVDQDHDLKKMSSENELEMGSDKEDQEMQEPPKKAKKNKQRMDSESEDEIPKTESEKITSSPKNKLKGLVDSESEPEETAEEVSPVKNKLKGLVDSESEPELDNPEESAGEQEAPMESALSREKPKKAKVVRESAKKALEGMQAIQSEQQRLHREAHINVPYHQPKPRTLKEFLSRRTINAPLATALAGGSPMPSRQPRKSVGLRMTREELEAYAKLMEDRAKEATEFFKSESESDEEDDSENEEPMELKDNPGVMDEMLDNPKTPEQPKNDTEDMTSQAVIEVPVLGEDKTDDTVGDEAMVADSITEEEPIASTSTAAALKLADNFEIQQETNAKSPSKVCLVTEVVELPKLDLSTINITPSSKPATPKISEVIRQLKIEKSLDESPSLKGDPNMVIDLETGDMFAKKPTGVDDLLNRLMKTREAKKHKTTETVNILTTEHGKLEMSKVSIHLHEEEIAKEPKPGAGYMKMQEHLKTLITKKRMEDLRKKQAEEQEKMAEDEEEGMDVDEEYEPEDKPGYAEVTINEDEEIIDKVDSTAEDDGDAEENKNDADEDPEDNPVEDSEDEKNDSESEQECEANPEPETQTRKKNRIIKAFEDDNSDEDDLDLLQTPKPSNVAPITATQLQLSAHKLFDVETRRTASDEENELLDLCSGQFPQTQMLSSDAPSVDTAVISQIPMTQFGGSSQAADELEGLCSGTFATQLPSQAPTQQPEQQEESEVPAAVANRIVSSDEEAQEDALEVDKPRNKKLTKKRPKKKAKLGFSDDEDSDDEVEEFDEESDAEPVEEIPETFVDYDSEENEIVVEMTKKDRKIRAANFVDKEAELSESEWGSADEDEKNMDEYDIELGDEDQFDRDKLRHELGQIHARKMMDQDIREVRKIKELLFEEEEEGANRQRQFRWKNVEAGFSLDDNRTDNGEGNDGSGDEENEHLWRKIRYEREQLLLEKGLKPEVASPLSTSVINTSNNGNSPAIRRLNIISSKKTTVEVKKNSPFLISKTIAGKQQKSAVRGSFLIRDQQTLSKLAGLTKGTSGDVDAAEGTISVKSAKAKNFVFATLTEEEHENRKRKAADILNSSTETGVNFIKKPKLEPRRDKCLIDQLL.

A compositionally biased stretch (low complexity) spans 1–12; it reads MSESLAETAAAA. Disordered regions lie at residues 1–490, 544–566, and 585–636; these read MSES…KAKV, ATAL…GLRM, and ATEF…TEDM. Phosphoserine is present on residues Ser-45, Ser-49, Ser-52, Ser-64, Ser-75, Ser-109, and Ser-114. A compositionally biased stretch (basic and acidic residues) spans 121 to 133; sequence QAEKKTQKEEGKQ. Positions 154 to 163 are enriched in basic residues; sequence KSNKTKKAVK. Over residues 205 to 216 the composition is skewed to basic and acidic residues; it reads EYDHHQQHEKPA. Positions 217 to 228 are enriched in basic residues; the sequence is KTQKSKKLAKKQ. 4 stretches are compositionally biased toward basic and acidic residues: residues 229-246, 254-263, 273-286, and 296-335; these read KQQE…EKKK, KKSDKSKIDS, EDLK…EPQK, and TNKD…EQIV. Residues 260–281 are a coiled coil; sequence KIDSLMDNEEDAGEDLKMYQED. The segment covering 336–346 has biased composition (basic residues); it reads KPKKMAKKNKQ. Ser-350 and Ser-354 each carry phosphoserine. Residues 358 to 373 are compositionally biased toward basic and acidic residues; sequence QNEKVDQDHDLKKMSS. Residues 375 to 388 are compositionally biased toward acidic residues; sequence NELEMGSDKEDQEM. 9 positions are modified to phosphoserine: Ser-381, Ser-404, Ser-406, Ser-432, Ser-434, Ser-444, Ser-456, Ser-458, and Ser-468. Over residues 400–417 the composition is skewed to basic and acidic residues; that stretch reads QRMDSESEDEIPKTESEK. A compositionally biased stretch (acidic residues) spans 432–441; that stretch reads SESEPEETAE. Residues 456–470 show a composition bias toward acidic residues; the sequence is SESEPELDNPEESAG. Residues 564–587 are a coiled coil; sequence LRMTREELEAYAKLMEDRAKEATE. Positions 594–606 are enriched in acidic residues; sequence ESDEEDDSENEEP. Thr-693 is subject to Phosphothreonine. The stretch at 839–874 forms a coiled coil; the sequence is LITKKRMEDLRKKQAEEQEKMAEDEEEGMDVDEEYE. Positions 845-859 are enriched in basic and acidic residues; the sequence is MEDLRKKQAEEQEKM. The interval 845–977 is disordered; that stretch reads MEDLRKKQAE…LDLLQTPKPS (133 aa). Composition is skewed to acidic residues over residues 860–875, 913–942, and 960–969; these read AEDE…EYEP, ADED…EANP, and DDNSDEDDLD. Ser-963 is subject to Phosphoserine. At Thr-973 the chain carries Phosphothreonine. Ser-990 carries the post-translational modification Phosphoserine. Positions 1058–1154 are disordered; sequence CSGTFATQLP…AEPVEEIPET (97 aa). Over residues 1067 to 1076 the composition is skewed to low complexity; it reads PSQAPTQQPE. Residues Ser-1093 and Ser-1094 each carry the phosphoserine modification. Over residues 1094–1103 the composition is skewed to acidic residues; it reads SDEEAQEDAL. The segment covering 1109-1123 has biased composition (basic residues); the sequence is RNKKLTKKRPKKKAK. Residues 1127–1154 show a composition bias toward acidic residues; sequence SDDEDSDDEVEEFDEESDAEPVEEIPET. Ser-1287 carries the phosphoserine modification.

The protein belongs to the claspin family. Post-translationally, phosphorylated in response to DNA damage by IR and HU treatment. Phosphorylation does not require mei-41 or tefu. Detected in the ovary but not in the testis (at protein level).

The protein localises to the nucleus. Its function is as follows. Required for checkpoint signaling in response to DNA replication stress; either resulting from normal embryogenesis or induced by the DNA synthesis inhibitor hydroxyurea (HU). It is not required for the G2 arrest resulting from DNA double strand breaks induced by ionizing irradiation (IR). Necessary for the timely phosphorylation of Cdk1 at the mid-blastula transition. May have a minor role in maintaining genomic stability in mitotic cells. The chain is Claspin from Drosophila melanogaster (Fruit fly).